The chain runs to 344 residues: Lipase chaperone (344 aa).

The helical transmembrane segment at 14–34 (AAIYGGVGLAAVAGVAMWSGA) threads the bilayer.

This sequence belongs to the lipase chaperone family.

The protein resides in the cell inner membrane. In terms of biological role, may be involved in the folding of the extracellular lipase during its passage through the periplasm. In Burkholderia cenocepacia (strain ATCC BAA-245 / DSM 16553 / LMG 16656 / NCTC 13227 / J2315 / CF5610) (Burkholderia cepacia (strain J2315)), this protein is Lipase chaperone.